We begin with the raw amino-acid sequence, 357 residues long: Zinc finger protein 830 (357 aa).

The segment at 47–69 (CVVCNIQIKSELLWPAHILGKQH) adopts a C2H2-type zinc-finger fold. 3 disordered regions span residues 98–126 (RKGS…TKLP), 157–194 (DDDE…ADRL), and 231–255 (ALPE…PKDQ). The span at 99 to 115 (KGSEPENQESKRIKGTE) shows a compositional bias: basic and acidic residues. Over residues 157–168 (DDDEVEGEEYEN) the composition is skewed to acidic residues. Basic and acidic residues predominate over residues 242–255 (ADAKVRKVDAPKDQ). A coiled-coil region spans residues 279-325 (AEEDEEGRLDRQIDEIDEQIECYRRVEHLRDLKDTLQDAKMEVLKSK).

It localises to the nucleus. Its subcellular location is the chromosome. The protein localises to the nucleus speckle. Its function is as follows. May act as an important regulator of the cell cycle that participates in the maintenance of genome integrity. The sequence is that of Zinc finger protein 830 from Xenopus tropicalis (Western clawed frog).